A 494-amino-acid polypeptide reads, in one-letter code: MFKFTFALALCVLAAGLVLAQHNPHWWGNRNTIVHLFEWKWEDIAEECENFLGPRGFAGVQVSPANENIVSPGRPWWERYQPISYKLITRSGNEEQFADMVRRCNEVGVRIYVDVLLNHMSADFVGQAVGTAGTEADPAVKSFPGVPYSAEDFHPSCEIYDWNDRYQIQHCELVGLKDLDQSRDWVRTKLIEFLDHLIELGVAGFRVDAAKHMASEDLEFIYGSLSDLKIEHGFPHSSRPFIFQEVIDHGGQEVTREEYNSLGAVTEFRFSQEIGNAFRGNNALKWLQSWGTDWGFLSSGQALTFVDNHDNQRDGGAVLTYKSPRQYKMATAFHLAYPYGISRVMSSFAFDDHDSAPPQDAQEELISPEFDADGGCANGWICEHRWRQIYNMVGFKNAVRDTEISNWWDNGDSQIAFCRGSKGFIAFNNNMYNLAEVLQTCLPKGVYCDVISGDLINGSCSGKSVYVGDDGLGFVSIDSDDFDGVLAIHVDARI.

A signal peptide spans 1–20; the sequence is MFKFTFALALCVLAAGLVLA. A Pyrrolidone carboxylic acid modification is found at Gln-21. Cys-48 and Cys-104 are joined by a disulfide. 3 residues coordinate Ca(2+): Asn-118, Gln-169, and Asp-178. Residues Cys-157 and Cys-171 are joined by a disulfide bond. Position 206 (Arg-206) interacts with chloride. Residue Asp-208 is the Nucleophile of the active site. His-212 contacts Ca(2+). Glu-245 acts as the Proton donor in catalysis. The chloride site is built by Asn-308 and Arg-343. Disulfide bonds link Cys-376–Cys-382, Cys-418–Cys-441, and Cys-448–Cys-460.

The protein belongs to the glycosyl hydrolase 13 family. In terms of assembly, monomer. Requires Ca(2+) as cofactor. Chloride serves as cofactor.

It is found in the secreted. The catalysed reaction is Endohydrolysis of (1-&gt;4)-alpha-D-glucosidic linkages in polysaccharides containing three or more (1-&gt;4)-alpha-linked D-glucose units.. The sequence is that of Alpha-amylase-related protein (Amyrel) from Drosophila pseudoobscura pseudoobscura (Fruit fly).